Reading from the N-terminus, the 252-residue chain is 2-C-methyl-D-erythritol 4-phosphate cytidylyltransferase (252 aa).

This sequence belongs to the IspD/TarI cytidylyltransferase family. IspD subfamily.

The catalysed reaction is 2-C-methyl-D-erythritol 4-phosphate + CTP + H(+) = 4-CDP-2-C-methyl-D-erythritol + diphosphate. It functions in the pathway isoprenoid biosynthesis; isopentenyl diphosphate biosynthesis via DXP pathway; isopentenyl diphosphate from 1-deoxy-D-xylulose 5-phosphate: step 2/6. Functionally, catalyzes the formation of 4-diphosphocytidyl-2-C-methyl-D-erythritol from CTP and 2-C-methyl-D-erythritol 4-phosphate (MEP). This is 2-C-methyl-D-erythritol 4-phosphate cytidylyltransferase from Chlorobium phaeobacteroides (strain BS1).